Reading from the N-terminus, the 499-residue chain is Glycerol kinase (499 aa).

Threonine 12 provides a ligand contact to ADP. The ATP site is built by threonine 12, threonine 13, and serine 14. Residue threonine 12 coordinates sn-glycerol 3-phosphate. Arginine 16 is an ADP binding site. Sn-glycerol 3-phosphate is bound by residues arginine 82, glutamate 83, tyrosine 134, and aspartate 240. Glycerol is bound by residues arginine 82, glutamate 83, tyrosine 134, aspartate 240, and glutamine 241. Threonine 262 and glycine 306 together coordinate ADP. The ATP site is built by threonine 262, glycine 306, glutamine 310, and glycine 412. ADP is bound by residues glycine 412 and asparagine 416.

It belongs to the FGGY kinase family.

The catalysed reaction is glycerol + ATP = sn-glycerol 3-phosphate + ADP + H(+). The protein operates within polyol metabolism; glycerol degradation via glycerol kinase pathway; sn-glycerol 3-phosphate from glycerol: step 1/1. Its activity is regulated as follows. Inhibited by fructose 1,6-bisphosphate (FBP). In terms of biological role, key enzyme in the regulation of glycerol uptake and metabolism. Catalyzes the phosphorylation of glycerol to yield sn-glycerol 3-phosphate. In Nocardia farcinica (strain IFM 10152), this protein is Glycerol kinase.